Reading from the N-terminus, the 295-residue chain is 4-hydroxy-tetrahydrodipicolinate synthase (295 aa).

Pyruvate is bound at residue threonine 46. Tyrosine 134 (proton donor/acceptor) is an active-site residue. Lysine 162 functions as the Schiff-base intermediate with substrate in the catalytic mechanism. Pyruvate is bound at residue isoleucine 205.

It belongs to the DapA family. Homotetramer; dimer of dimers.

The protein resides in the cytoplasm. The enzyme catalyses L-aspartate 4-semialdehyde + pyruvate = (2S,4S)-4-hydroxy-2,3,4,5-tetrahydrodipicolinate + H2O + H(+). The protein operates within amino-acid biosynthesis; L-lysine biosynthesis via DAP pathway; (S)-tetrahydrodipicolinate from L-aspartate: step 3/4. Its function is as follows. Catalyzes the condensation of (S)-aspartate-beta-semialdehyde [(S)-ASA] and pyruvate to 4-hydroxy-tetrahydrodipicolinate (HTPA). This Anaeromyxobacter sp. (strain K) protein is 4-hydroxy-tetrahydrodipicolinate synthase.